We begin with the raw amino-acid sequence, 200 residues long: Histone chaperone asf1a-B (200 aa).

The protein belongs to the ASF1 family. Interacts with histone H3 (including both histone H3.1 and H3.3) and histone H4.

The protein resides in the nucleus. Its function is as follows. Histone chaperone that facilitates histone deposition and histone exchange and removal during nucleosome assembly and disassembly. The polypeptide is Histone chaperone asf1a-B (asf1ab) (Xenopus laevis (African clawed frog)).